The following is a 212-amino-acid chain: Large ribosomal subunit protein bL25 (212 aa).

Positions 183-212 are disordered; that stretch reads HDLPVASIHKPKGAKADDAEGEEGEEGGEE. Positions 201–212 are enriched in acidic residues; sequence AEGEEGEEGGEE.

The protein belongs to the bacterial ribosomal protein bL25 family. CTC subfamily. In terms of assembly, part of the 50S ribosomal subunit; part of the 5S rRNA/L5/L18/L25 subcomplex. Contacts the 5S rRNA. Binds to the 5S rRNA independently of L5 and L18.

Its function is as follows. This is one of the proteins that binds to the 5S RNA in the ribosome where it forms part of the central protuberance. The chain is Large ribosomal subunit protein bL25 from Marinobacter nauticus (strain ATCC 700491 / DSM 11845 / VT8) (Marinobacter aquaeolei).